Consider the following 1858-residue polypeptide: Inactive histone-lysine N-methyltransferase 2E (1858 aa).

An HCFC1-binding motif (HBM) motif is present at residues 63–66 (DHNY). A PHD-type zinc finger spans residues 118-166 (VTRCICGFTHDDGYMICCDKCSVWQHIDCMGIDRQHIPDTYLCERCQPR). Zn(2+) contacts are provided by C121, C123, C135, C138, H143, C146, C160, and C163. The interval 217 to 269 (ASRVSKVNDKRRKKSGEKEQHISKCKKAFREGSRKSSRVKGSAPEIDPSSDGS) is disordered. Positions 232–250 (GEKEQHISKCKKAFREGSR) are enriched in basic and acidic residues. Residues 330-447 (PPVESHIQKN…KGTEITIAFD (118 aa)) enclose the SET domain. Residue S435 is glycosylated (O-linked (GlcNAc) serine). O-linked (GlcNAc) threonine glycosylation occurs at T440. The tract at residues 475–530 (SESMENINSGYETRRKKGKKDKDISKEKDTQNQNITLDCEGTTNKMKSPETKQRKL) is disordered. Residues 494–504 (KDKDISKEKDT) are compositionally biased toward basic and acidic residues. Residues 505 to 520 (QNQNITLDCEGTTNKM) are compositionally biased toward polar residues. Residues 559–615 (VEMESEEQIAERKRKMTREERKMEAILQAFARLEKREKRREQALERISTAKTEVKTE) are a coiled coil. A Phosphoserine modification is found at S623. Residues 630–687 (EQAKEENASKPTPAKVNRTKQRKSFSRSRTHIGQQRRRHRTVSMCSDIQPSSPDIEVT) form a disordered region. The segment covering 646–670 (NRTKQRKSFSRSRTHIGQQRRRHRT) has biased composition (basic residues). The segment covering 672–687 (SMCSDIQPSSPDIEVT) has biased composition (polar residues). S837 and S845 each carry phosphoserine. 2 stretches are compositionally biased toward low complexity: residues 887-901 (TSTPTPSPYATPTHT) and 933-957 (PVTPVTPGTPGNTMHFENISSPESS). Disordered stretches follow at residues 887 to 960 (TSTP…SPEI) and 1039 to 1068 (LETPAHDRAEPNSQLDSTHSGRGTMYSSWV). The segment covering 1039-1048 (LETPAHDRAE) has biased composition (basic and acidic residues). A compositionally biased stretch (polar residues) spans 1049-1068 (PNSQLDSTHSGRGTMYSSWV). A Phosphoserine modification is found at S1070. 2 disordered regions span residues 1164–1561 (KRQR…QNQQ) and 1581–1835 (VFTS…PVPG). Composition is skewed to polar residues over residues 1186–1206 (PHASGSLSNNGDGCASSNDNG) and 1222–1235 (TVYNATSEETSNNC). A Phosphoserine modification is found at S1273. Positions 1273–1282 (SDHRKDKDSG) are enriched in basic and acidic residues. Composition is skewed to low complexity over residues 1285–1303 (SPCVSCSPSHVQSSPSSHS) and 1349–1362 (KSPPKMSKPGSPGS). Phosphoserine is present on S1359. 2 stretches are compositionally biased toward polar residues: residues 1400 to 1432 (QQKQLSNNNQALSKNHPPQTHVRNSSEQLSQKL) and 1506 to 1542 (LPANTQQATSGTLFTQTPSGQSSATYSQFNQQSLNST). The span at 1543-1553 (APPPPPPPPPS) shows a compositional bias: pro residues. Residues 1581–1599 (VFTSGPNQALPGTTSQQTV) are compositionally biased toward polar residues. Pro residues predominate over residues 1626–1637 (VPPPPPPPPAPG). Residues 1642–1651 (QQPNSHQQHS) show a composition bias toward polar residues. Residues 1677 to 1687 (LPPPPPPPGPA) show a composition bias toward pro residues. Positions 1698-1711 (TGLQGLQAQHQHVV) are enriched in polar residues. Residues 1714 to 1724 (APPPPPPPPPS) are compositionally biased toward pro residues. Over residues 1798–1808 (QGPNSIPTPTA) the composition is skewed to polar residues.

Belongs to the class V-like SAM-binding methyltransferase superfamily. Histone-lysine methyltransferase family. TRX/MLL subfamily. In terms of assembly, component of a complex composed of KMT2E (isoform 3), OGT and USP7; the complex stabilizes KMT2E, preventing KMT2E ubiquitination and proteasomal-mediated degradation. Isoform 3 interacts (via N-terminus) with OGT (via TRP repeats). Isoform 3 interacts with deubiquitinating enzyme USP7 (via MATH domain). Isoform 3 interacts (via HBM motif) with HCFC1 (via Kelch domain). Isoform 3 interacts with E2F1; the interaction is probably indirect and is mediated via HCFC1. In terms of processing, ubiquitinated. Deubiquitinated by USP7. O-glycosylated at Ser-435 and Thr-440 in the SET domain by OGT which probably prevents KMT2E proteasomal-mediated degradation. In terms of tissue distribution, widely expressed in both adult and fetal tissues. Highest levels of expression observed in fetal thymus and kidney and in adult hematopoietic tissues, jejunum and cerebellum. Isoform NKp44L: Not detected on circulating cells from healthy individuals, but is expressed on a large panel of tumor and transformed cells.

The protein localises to the chromosome. It is found in the cytoplasm. It localises to the cytoskeleton. The protein resides in the microtubule organizing center. Its subcellular location is the centrosome. The protein localises to the nucleus speckle. It is found in the nucleus. It localises to the nucleoplasm. The protein resides in the cell membrane. In terms of biological role, associates with chromatin regions downstream of transcriptional start sites of active genes and thus regulates gene transcription. Chromatin interaction is mediated via the binding to tri-methylated histone H3 at 'Lys-4' (H3K4me3). Key regulator of hematopoiesis involved in terminal myeloid differentiation and in the regulation of hematopoietic stem cell (HSCs) self-renewal by a mechanism that involves DNA methylation. Also acts as an important cell cycle regulator, participating in cell cycle regulatory network machinery at multiple cell cycle stages including G1/S transition, S phase progression and mitotic entry. Recruited to E2F1 responsive promoters by HCFC1 where it stimulates tri-methylation of histone H3 at 'Lys-4' and transcriptional activation and thereby facilitates G1 to S phase transition. During myoblast differentiation, required to suppress inappropriate expression of S-phase-promoting genes and maintain expression of determination genes in quiescent cells. Its function is as follows. Cellular ligand for NCR2/NKp44, may play a role as a danger signal in cytotoxicity and NK-cell-mediated innate immunity. The protein is Inactive histone-lysine N-methyltransferase 2E (KMT2E) of Homo sapiens (Human).